Here is a 328-residue protein sequence, read N- to C-terminus: Tetraacyldisaccharide 4'-kinase (328 aa).

Residue 58 to 65 coordinates ATP; it reads TMGGAGKT.

This sequence belongs to the LpxK family.

The catalysed reaction is a lipid A disaccharide + ATP = a lipid IVA + ADP + H(+). It functions in the pathway glycolipid biosynthesis; lipid IV(A) biosynthesis; lipid IV(A) from (3R)-3-hydroxytetradecanoyl-[acyl-carrier-protein] and UDP-N-acetyl-alpha-D-glucosamine: step 6/6. Functionally, transfers the gamma-phosphate of ATP to the 4'-position of a tetraacyldisaccharide 1-phosphate intermediate (termed DS-1-P) to form tetraacyldisaccharide 1,4'-bis-phosphate (lipid IVA). This Phenylobacterium zucineum (strain HLK1) protein is Tetraacyldisaccharide 4'-kinase.